The sequence spans 334 residues: Ornithine carbamoyltransferase (334 aa).

Carbamoyl phosphate-binding positions include 57–60 (STRT), Q84, R108, and 135–138 (HPTQ). Residues N169, D233, and 237-238 (SM) each bind L-ornithine. Residues 275 to 276 (CL) and R320 each bind carbamoyl phosphate.

It belongs to the aspartate/ornithine carbamoyltransferase superfamily. OTCase family.

The protein resides in the cytoplasm. It catalyses the reaction carbamoyl phosphate + L-ornithine = L-citrulline + phosphate + H(+). It participates in amino-acid biosynthesis; L-arginine biosynthesis; L-arginine from L-ornithine and carbamoyl phosphate: step 1/3. Reversibly catalyzes the transfer of the carbamoyl group from carbamoyl phosphate (CP) to the N(epsilon) atom of ornithine (ORN) to produce L-citrulline. The sequence is that of Ornithine carbamoyltransferase from Aeromonas salmonicida (strain A449).